We begin with the raw amino-acid sequence, 79 residues long: Beta-defensin 15 (79 aa).

Positions Met-1–Ala-20 are cleaved as a signal peptide. Disulfide bonds link Cys-26-Cys-53, Cys-33-Cys-47, and Cys-37-Cys-54.

Belongs to the beta-defensin family. Expressed in testis and to a lesser extent in epididymis (caput, corpus and cauda). Also weakly expressed in kidneys and colon.

Its subcellular location is the secreted. Has antibacterial activity. The sequence is that of Beta-defensin 15 (Defb15) from Mus musculus (Mouse).